We begin with the raw amino-acid sequence, 196 residues long: DnaA initiator-associating protein DiaA (196 aa).

An SIS domain is found at 34 to 196 (LVHSLLNGNK…DNTLFPHQDD (163 aa)).

Belongs to the SIS family. DiaA subfamily. Homotetramer; dimer of dimers.

Its function is as follows. Required for the timely initiation of chromosomal replication via direct interactions with the DnaA initiator protein. In Citrobacter koseri (strain ATCC BAA-895 / CDC 4225-83 / SGSC4696), this protein is DnaA initiator-associating protein DiaA.